Consider the following 20-residue polypeptide: Protein YfiS (20 aa).

This Escherichia coli (strain K12) protein is Protein YfiS.